We begin with the raw amino-acid sequence, 128 residues long: L-ectoine synthase (128 aa).

It belongs to the ectoine synthase family.

The catalysed reaction is (2S)-4-acetamido-2-aminobutanoate = L-ectoine + H2O. Its pathway is amine and polyamine biosynthesis; ectoine biosynthesis; L-ectoine from L-aspartate 4-semialdehyde: step 3/3. Functionally, catalyzes the circularization of gamma-N-acetyl-alpha,gamma-diaminobutyric acid (ADABA) to ectoine (1,4,5,6-tetrahydro-2-methyl-4-pyrimidine carboxylic acid), which is an excellent osmoprotectant. The chain is L-ectoine synthase from Aliivibrio fischeri (strain ATCC 700601 / ES114) (Vibrio fischeri).